A 230-amino-acid chain; its full sequence is V-type proton ATPase subunit E (230 aa).

The protein belongs to the V-ATPase E subunit family. V-ATPase is a heteromultimeric enzyme composed of a peripheral catalytic V1 complex (components A to H) attached to an integral membrane V0 proton pore complex (components: a, c, c', c'' and d).

In terms of biological role, subunit of the peripheral V1 complex of vacuolar ATPase essential for assembly or catalytic function. V-ATPase is responsible for acidifying a variety of intracellular compartments in eukaryotic cells. This Citrus limon (Lemon) protein is V-type proton ATPase subunit E (VATE).